We begin with the raw amino-acid sequence, 150 residues long: Protein E6 (150 aa).

2 zinc fingers span residues 31–67 (CIWC…CAFC) and 104–140 (CALC…CTHC).

This sequence belongs to the papillomaviridae E6 protein family. Forms homodimers. Interacts with ubiquitin-protein ligase UBE3A/E6-AP; this interaction stimulates UBE3A ubiquitin activity. Interacts with host TP53 and EP300; this interaction inhibits TP53 activity.

The protein resides in the host cytoplasm. It localises to the host nucleus. In terms of biological role, plays a major role in the induction and maintenance of cellular transformation. E6 associates with host UBE3A/E6-AP ubiquitin-protein ligase and modulates its activity. Sequesters tumor suppressor TP53 in the host cytoplasm and modulates its activity by interacting with host EP300 that results in the reduction of TP53 acetylation and activation. In turn, apoptosis induced by DNA damage is inhibited. E6 also protects host keratinocytes from apoptosis by mediating the degradation of host BAK1. May also inhibit host immune response. This Homo sapiens (Human) protein is Protein E6.